A 227-amino-acid chain; its full sequence is 7-cyano-7-deazaguanine synthase (227 aa).

9-19 (LSGGLDSATVL) is an ATP binding site. Zn(2+) is bound by residues cysteine 189, cysteine 199, cysteine 202, and cysteine 205.

Belongs to the QueC family. It depends on Zn(2+) as a cofactor.

The catalysed reaction is 7-carboxy-7-deazaguanine + NH4(+) + ATP = 7-cyano-7-deazaguanine + ADP + phosphate + H2O + H(+). Its pathway is purine metabolism; 7-cyano-7-deazaguanine biosynthesis. In terms of biological role, catalyzes the ATP-dependent conversion of 7-carboxy-7-deazaguanine (CDG) to 7-cyano-7-deazaguanine (preQ(0)). This is 7-cyano-7-deazaguanine synthase from Cupriavidus necator (strain ATCC 17699 / DSM 428 / KCTC 22496 / NCIMB 10442 / H16 / Stanier 337) (Ralstonia eutropha).